A 405-amino-acid polypeptide reads, in one-letter code: uncharacterized protein (405 aa).

This is an uncharacterized protein from Saimiri sciureus (Common squirrel monkey).